A 103-amino-acid polypeptide reads, in one-letter code: UPF0298 protein LACR_0404 (103 aa).

It belongs to the UPF0298 family.

It localises to the cytoplasm. The sequence is that of UPF0298 protein LACR_0404 from Lactococcus lactis subsp. cremoris (strain SK11).